Consider the following 227-residue polypeptide: Peroxiredoxin 1 (227 aa).

Positions 6–161 constitute a Thioredoxin domain; the sequence is PLIGEKFPEM…ILRLIKSLQM (156 aa). The active-site Cysteine sulfenic acid (-SOH) intermediate is the Cys48. Arg124 lines the substrate pocket.

Belongs to the peroxiredoxin family. Prx6 subfamily. Homodecamer. Pentamer of dimers that assemble into a ring structure.

The protein resides in the cytoplasm. It catalyses the reaction a hydroperoxide + [thioredoxin]-dithiol = an alcohol + [thioredoxin]-disulfide + H2O. Its function is as follows. Thiol-specific peroxidase that catalyzes the reduction of hydrogen peroxide and organic hydroperoxides to water and alcohols, respectively. Plays a role in cell protection against oxidative stress by detoxifying peroxides. The chain is Peroxiredoxin 1 from Picrophilus torridus (strain ATCC 700027 / DSM 9790 / JCM 10055 / NBRC 100828 / KAW 2/3).